The sequence spans 1627 residues: Pleckstrin homology domain-containing family G member 4B (1627 aa).

Disordered regions lie at residues 211-349 (YSSC…VQPR), 381-475 (LTGA…GQAV), 501-537 (VSTDGGSLHCHNPSGPSDVPARQPHPEQEGWPPGTGD), 959-1008 (SEAA…PAQP), 1049-1111 (TTAH…SKGL), and 1124-1159 (PLWQHARSPPVTQSRSLSSPSGLHPAEEDGRQQVGS). The span at 241 to 251 (GSASCPDTLTS) shows a compositional bias: polar residues. Composition is skewed to basic and acidic residues over residues 262–273 (QLRHLPYPERAE) and 310–322 (ERPDPMDQEDRPK). The segment covering 465–474 (RPGGHLGGQA) has biased composition (gly residues). Positions 975-985 (PKHERAQEAMR) are enriched in basic and acidic residues. A compositionally biased stretch (polar residues) spans 1057-1068 (SACSSEPTQTLA). Basic residues predominate over residues 1070-1081 (RPRKHPQKKMIK). Composition is skewed to polar residues over residues 1101 to 1111 (PDHTSVFSKGL) and 1133 to 1144 (PVTQSRSLSSPS). One can recognise a DH domain in the interval 1161 to 1340 (RLRHIMAEMI…CFQLRHGNDL (180 aa)). In terms of domain architecture, PH spans 1352-1460 (NLKEQGQLRC…WTDVIGRILW (109 aa)). The tract at residues 1519–1558 (KGTESQMRGSTAVSSSDHAAPFKRPHSTISDSSTSSSSSQ) is disordered. Over residues 1521 to 1535 (TESQMRGSTAVSSSD) the composition is skewed to polar residues. Over residues 1545 to 1558 (STISDSSTSSSSSQ) the composition is skewed to low complexity.

As to quaternary structure, found in a complex with ARHGEF11 and ARHGEF12; binding to ARHGEF11 and ARHGEF12 enhances CDC42 GEF activity of PLEKHG4B, and PLEKHG4B, in turn, inhibits ARHGEF11- and ARHGEF12-mediated RHOA activation. Interacts with ANXA2; this interaction is required for PLEKHG4B localization to cell-cell adhesions.

Its subcellular location is the basal cell membrane. The protein localises to the cell junction. The protein resides in the nucleus. It is found in the cytoplasm. In terms of biological role, guanine nucleotide exchange factor (GEF) which specifically activates small GTPase CDC42 by exchanging bound GDP for free GTP. Plays a role in actin cytoskeletal remodeling in the late stage of cell-cell junction formation by regulating the contractility of actin filaments, which prompts the conversion from 'open' to 'closed' junctions. The chain is Pleckstrin homology domain-containing family G member 4B from Homo sapiens (Human).